Reading from the N-terminus, the 191-residue chain is UPF0312 protein Sbal195_3198 (191 aa).

The signal sequence occupies residues 1–22 (MKKQLFSALIGASLLAPMAASA).

It belongs to the UPF0312 family. Type 1 subfamily.

It is found in the periplasm. This Shewanella baltica (strain OS195) protein is UPF0312 protein Sbal195_3198.